The chain runs to 296 residues: Protoheme IX farnesyltransferase (296 aa).

A run of 9 helical transmembrane segments spans residues 11–31, 35–55, 84–104, 107–127, 132–152, 162–182, 208–228, 229–249, and 264–284; these read PGIIFGNLISVIGGFLLAAQG, YPLFLATLVGVSLVVASGCVF, VTLVYASLLGIAGFALLYVAA, LAMWLAVMGFVVYVGVYSLYM, VYGTLIGSLSGAAPPVIGYCA, LILLLIFSLWQMPHSYAIAIF, ITLYIVAFAIATLMLSLGGYA, GYKYLIVAAAVSVWWLGMALS, and LFVFSIVAITSLSVMMSVDSM.

It belongs to the UbiA prenyltransferase family. Protoheme IX farnesyltransferase subfamily.

It is found in the cell inner membrane. It catalyses the reaction heme b + (2E,6E)-farnesyl diphosphate + H2O = Fe(II)-heme o + diphosphate. The protein operates within porphyrin-containing compound metabolism; heme O biosynthesis; heme O from protoheme: step 1/1. Functionally, converts heme B (protoheme IX) to heme O by substitution of the vinyl group on carbon 2 of heme B porphyrin ring with a hydroxyethyl farnesyl side group. The chain is Protoheme IX farnesyltransferase from Pectobacterium atrosepticum (strain SCRI 1043 / ATCC BAA-672) (Erwinia carotovora subsp. atroseptica).